Consider the following 434-residue polypeptide: DNA primase large subunit PriL (434 aa).

4 residues coordinate [4Fe-4S] cluster: C281, C392, C403, and C409.

The protein belongs to the eukaryotic-type primase large subunit family. As to quaternary structure, heterodimer of a small subunit (PriS) and a large subunit (PriL). Requires [4Fe-4S] cluster as cofactor.

Functionally, regulatory subunit of DNA primase, an RNA polymerase that catalyzes the synthesis of short RNA molecules used as primers for DNA polymerase during DNA replication. Stabilizes and modulates the activity of the small subunit, increasing the rate of DNA synthesis, and conferring RNA synthesis capability. The DNA polymerase activity may enable DNA primase to also catalyze primer extension after primer synthesis. May also play a role in DNA repair. The polypeptide is DNA primase large subunit PriL (Methanothermobacter thermautotrophicus (strain ATCC 29096 / DSM 1053 / JCM 10044 / NBRC 100330 / Delta H) (Methanobacterium thermoautotrophicum)).